The chain runs to 427 residues: UPF0229 protein bll6755 (427 aa).

Residues 86–107 (DYLQRSGQGSAKDSGPGEGDSE) are disordered.

It belongs to the UPF0229 family.

The sequence is that of UPF0229 protein bll6755 from Bradyrhizobium diazoefficiens (strain JCM 10833 / BCRC 13528 / IAM 13628 / NBRC 14792 / USDA 110).